A 370-amino-acid polypeptide reads, in one-letter code: 2-Hydroxyacid oxidase 1 (370 aa).

The region spanning 1 to 365 (MLPRLVCISD…DKTLVRKNPL (365 aa)) is the FMN hydroxy acid dehydrogenase domain. A glyoxylate-binding site is contributed by tyrosine 26. FMN contacts are provided by residues 79-81 (ATA), serine 108, and glutamine 130. Tyrosine 132 is a glyoxylate binding site. Residue threonine 158 participates in FMN binding. Arginine 167 is a glyoxylate binding site. Lysine 184 carries the post-translational modification N6-succinyllysine. A phosphoserine mark is found at serine 194 and serine 230. Residues lysine 236 and serine 258 each coordinate FMN. Histidine 260 and arginine 263 together coordinate glyoxylate. Histidine 260 serves as the catalytic Proton acceptor. Residues 291-295 (DGGVR) and 314-315 (GR) each bind FMN. The short motif at 368-370 (SKI) is the Microbody targeting signal element.

It belongs to the FMN-dependent alpha-hydroxy acid dehydrogenase family. As to quaternary structure, homotetramer. Requires FMN as cofactor. As to expression, liver.

It localises to the peroxisome matrix. It carries out the reaction a (2S)-2-hydroxycarboxylate + O2 = a 2-oxocarboxylate + H2O2. It catalyses the reaction glycolate + O2 = glyoxylate + H2O2. The catalysed reaction is glyoxylate + O2 + H2O = oxalate + H2O2 + H(+). The enzyme catalyses 2-hydroxyhexadecanoate + O2 = 2-oxohexadecanoate + H2O2. It carries out the reaction 2-hydroxyoctanoate + O2 = 2-oxooctanoate + H2O2. It participates in amino-acid biosynthesis; glycine biosynthesis. Functionally, broad substrate specificity (S)-2-hydroxy-acid oxidase that preferentially oxidizes glycolate. The glyoxylate produced by the oxidation of glycolate can then be utilized by alanine-glyoxylate aminotransferase for the peroxisomal synthesis of glycine; this pathway appears to be an important step for the detoxification of glyoxylate which, if allowed to accumulate, may be metabolized to oxalate with formation of kidney stones. Can also catalyze the oxidation glyoxylate, and long chain hydroxyacids such as 2-hydroxyhexadecanoate and 2-hydroxyoctanoate. Active in vitro with the artificial electron acceptor 2,6-dichlorophenolindophenol (DCIP), but O2 is believed to be the physiological electron acceptor, leading to the production of H2O2. This is 2-Hydroxyacid oxidase 1 from Mus musculus (Mouse).